The primary structure comprises 85 residues: Homeobox protein knotted-1-like 7 (85 aa).

The region spanning E1 to I21 is the ELK domain. Residues M22–N85 constitute a DNA-binding region (homeobox; TALE-type).

Belongs to the TALE/KNOX homeobox family. As to expression, expressed in all tissues examined. Highest expression in leaves.

Its subcellular location is the nucleus. The chain is Homeobox protein knotted-1-like 7 (KNOX7) from Zea mays (Maize).